The chain runs to 251 residues: uncharacterized protein (251 aa).

4 helical membrane-spanning segments follow: residues 56–76 (LAVV…TLVA), 104–124 (IITV…FLLT), 184–204 (HGFV…LIIV), and 208–228 (YLIA…ANIS).

The protein localises to the membrane. This is an uncharacterized protein from Caenorhabditis elegans.